The following is a 1470-amino-acid chain: Gag-Pol polyprotein (1470 aa).

A lipid anchor (N-myristoyl glycine; by host) is attached at G2. The Nuclear export signal signature appears at F16 to R22. The short motif at K26–K32 is the Nuclear localization signal element. The disordered stretch occupies residues A117–Q144. A compositionally biased stretch (polar residues) spans G122–Q144. CCHC-type zinc fingers lie at residues P398–E415 and I419–G436. The tract at residues K479–S504 is disordered. Over residues C486 to S504 the composition is skewed to basic and acidic residues. The region spanning V531–F602 is the Peptidase A2 domain. The active-site For protease activity; shared with dimeric partner is the D536. The Reverse transcriptase domain maps to E658–L848. Residues D724, D799, and D800 each coordinate Mg(2+). The interval F841–W849 is RT 'primer grip'. Positions W1011–W1027 match the Tryptophan repeat motif motif. In terms of domain architecture, RNase H type-1 spans I1047–R1170. Mg(2+) is bound by residues D1056, E1091, D1111, and D1162. The segment at G1176–Q1217 adopts an Integrase-type zinc-finger fold. 4 residues coordinate Zn(2+): H1185, H1189, C1213, and C1216. The Integrase catalytic domain maps to V1227–I1377. Mg(2+) is bound by residues D1237 and D1289. A DNA-binding region (integrase-type) is located at residues F1396–D1443. A disordered region spans residues G1451–S1470.

In terms of assembly, homotrimer. Interacts with gp41 (via C-terminus). As to quaternary structure, homodimer. The active site consists of two apposed aspartic acid residues. Heterodimer of p66 RT and p51 RT (RT p66/p51). Heterodimerization of RT is essential for DNA polymerase activity. Despite the sequence identities, p66 RT and p51 RT have distinct folding. In terms of assembly, homotetramer; may further associate as a homohexadecamer. Requires Mg(2+) as cofactor. Specific enzymatic cleavages by the viral protease yield mature proteins. The protease is released by autocatalytic cleavage. The polyprotein is cleaved during and after budding, this process is termed maturation. Proteolytic cleavage of p66 RT removes the RNase H domain to yield the p51 RT subunit. In terms of processing, capsid protein p24 is phosphorylated.

The protein resides in the virion. It is found in the host nucleus. Its subcellular location is the host cytoplasm. It localises to the host cell membrane. The catalysed reaction is Specific for a P1 residue that is hydrophobic, and P1' variable, but often Pro.. It catalyses the reaction Endohydrolysis of RNA in RNA/DNA hybrids. Three different cleavage modes: 1. sequence-specific internal cleavage of RNA. Human immunodeficiency virus type 1 and Moloney murine leukemia virus enzymes prefer to cleave the RNA strand one nucleotide away from the RNA-DNA junction. 2. RNA 5'-end directed cleavage 13-19 nucleotides from the RNA end. 3. DNA 3'-end directed cleavage 15-20 nucleotides away from the primer terminus.. The enzyme catalyses 3'-end directed exonucleolytic cleavage of viral RNA-DNA hybrid.. It carries out the reaction DNA(n) + a 2'-deoxyribonucleoside 5'-triphosphate = DNA(n+1) + diphosphate. With respect to regulation, the viral protease is inhibited by many synthetic protease inhibitors (PIs), such as amprenavir, atazanavir, indinavir, loprinavir, nelfinavir, ritonavir and saquinavir. RT can be inhibited either by nucleoside RT inhibitors (NRTIs) or by non nucleoside RT inhibitors (NNRTIs). NRTIs act as chain terminators, whereas NNRTIs inhibit DNA polymerization by binding a small hydrophobic pocket near the RT active site and inducing an allosteric change in this region. Classical NRTIs are abacavir, adefovir (PMEA), didanosine (ddI), lamivudine (3TC), stavudine (d4T), tenofovir (PMPA), zalcitabine (ddC), and zidovudine (AZT). Classical NNRTIs are atevirdine (BHAP U-87201E), delavirdine, efavirenz (DMP-266), emivirine (I-EBU), and nevirapine (BI-RG-587). The tritherapies used as a basic effective treatment of AIDS associate two NRTIs and one NNRTI. Use of protease inhibitors in tritherapy regimens permit more ambitious therapeutic strategies. Functionally, gag-Pol polyprotein and Gag polyprotein may regulate their own translation, by the binding genomic RNA in the 5'-UTR. At low concentration, Gag-Pol and Gag would promote translation, whereas at high concentration, the polyproteins encapsidate genomic RNA and then shut off translation. In terms of biological role, matrix protein p17 has two main functions: in infected cell, it targets Gag and Gag-pol polyproteins to the plasma membrane via a multipartite membrane-binding signal, that includes its myristointegration complex. The myristoylation signal and the NLS exert conflicting influences its subcellular localization. The key regulation of these motifs might be phosphorylation of a portion of MA molecules on the C-terminal tyrosine at the time of virus maturation, by virion-associated cellular tyrosine kinase. Implicated in the release from host cell mediated by Vpu. Its function is as follows. Capsid protein p24 forms the conical core that encapsulates the genomic RNA-nucleocapsid complex in the virion. The core is constituted by capsid protein hexamer subunits. The core is disassembled soon after virion entry. Interaction with host PPIA/CYPA protects the virus from restriction by host TRIM5-alpha and from an unknown antiviral activity in host cells. This capsid restriction by TRIM5 is one of the factors which restricts SIV to the simian species. Nucleocapsid protein p7 encapsulates and protects viral dimeric unspliced (genomic) RNA. Binds these RNAs through its zinc fingers. Facilitates rearangement of nucleic acid secondary structure during retrotranscription of genomic RNA. This capability is referred to as nucleic acid chaperone activity. Functionally, the aspartyl protease mediates proteolytic cleavages of Gag and Gag-Pol polyproteins during or shortly after the release of the virion from the plasma membrane. Cleavages take place as an ordered, step-wise cascade to yield mature proteins. This process is called maturation. Displays maximal activity during the budding process just prior to particle release from the cell. Also cleaves Nef and Vif, probably concomitantly with viral structural proteins on maturation of virus particles. Hydrolyzes host EIF4GI and PABP1 in order to shut off the capped cellular mRNA translation. The resulting inhibition of cellular protein synthesis serves to ensure maximal viral gene expression and to evade host immune response. In terms of biological role, reverse transcriptase/ribonuclease H (RT) is a multifunctional enzyme that converts the viral dimeric RNA genome into dsDNA in the cytoplasm, shortly after virus entry into the cell. This enzyme displays a DNA polymerase activity that can copy either DNA or RNA templates, and a ribonuclease H (RNase H) activity that cleaves the RNA strand of RNA-DNA heteroduplexes in a partially processive 3' to 5' endonucleasic mode. Conversion of viral genomic RNA into dsDNA requires many steps. A tRNA binds to the primer-binding site (PBS) situated at the 5'-end of the viral RNA. RT uses the 3' end of the tRNA primer to perform a short round of RNA-dependent minus-strand DNA synthesis. The reading proceeds through the U5 region and ends after the repeated (R) region which is present at both ends of viral RNA. The portion of the RNA-DNA heteroduplex is digested by the RNase H, resulting in a ssDNA product attached to the tRNA primer. This ssDNA/tRNA hybridizes with the identical R region situated at the 3' end of viral RNA. This template exchange, known as minus-strand DNA strong stop transfer, can be either intra- or intermolecular. RT uses the 3' end of this newly synthesized short ssDNA to perform the RNA-dependent minus-strand DNA synthesis of the whole template. RNase H digests the RNA template except for two polypurine tracts (PPTs) situated at the 5'-end and near the center of the genome. It is not clear if both polymerase and RNase H activities are simultaneous. RNase H can probably proceed both in a polymerase-dependent (RNA cut into small fragments by the same RT performing DNA synthesis) and a polymerase-independent mode (cleavage of remaining RNA fragments by free RTs). Secondly, RT performs DNA-directed plus-strand DNA synthesis using the PPTs that have not been removed by RNase H as primers. PPTs and tRNA primers are then removed by RNase H. The 3' and 5' ssDNA PBS regions hybridize to form a circular dsDNA intermediate. Strand displacement synthesis by RT to the PBS and PPT ends produces a blunt ended, linear dsDNA copy of the viral genome that includes long terminal repeats (LTRs) at both ends. Its function is as follows. Integrase catalyzes viral DNA integration into the host chromosome, by performing a series of DNA cutting and joining reactions. This enzyme activity takes place after virion entry into a cell and reverse transcription of the RNA genome in dsDNA. The first step in the integration process is 3' processing. This step requires a complex comprising the viral genome, matrix protein, Vpr and integrase. This complex is called the pre-integration complex (PIC). The integrase protein removes 2 nucleotides from each 3' end of the viral DNA, leaving recessed CA OH's at the 3' ends. In the second step, the PIC enters cell nucleus. This process is mediated through integrase and Vpr proteins, and allows the virus to infect a non dividing cell. This ability to enter the nucleus is specific of lentiviruses, other retroviruses cannot and rely on cell division to access cell chromosomes. In the third step, termed strand transfer, the integrase protein joins the previously processed 3' ends to the 5' ends of strands of target cellular DNA at the site of integration. The 5'-ends are produced by integrase-catalyzed staggered cuts, 5 bp apart. A Y-shaped, gapped, recombination intermediate results, with the 5'-ends of the viral DNA strands and the 3' ends of target DNA strands remaining unjoined, flanking a gap of 5 bp. The last step is viral DNA integration into host chromosome. This involves host DNA repair synthesis in which the 5 bp gaps between the unjoined strands are filled in and then ligated. Since this process occurs at both cuts flanking the SIV genome, a 5 bp duplication of host DNA is produced at the ends of SIV integration. Alternatively, Integrase may catalyze the excision of viral DNA just after strand transfer, this is termed disintegration. The chain is Gag-Pol polyprotein (gag-pol) from Cercopithecidae (Old World monkeys).